Reading from the N-terminus, the 265-residue chain is 5'-nucleotidase SurE (265 aa).

4 residues coordinate a divalent metal cation: aspartate 9, aspartate 10, serine 40, and asparagine 96.

It belongs to the SurE nucleotidase family. Requires a divalent metal cation as cofactor.

The protein localises to the cytoplasm. It carries out the reaction a ribonucleoside 5'-phosphate + H2O = a ribonucleoside + phosphate. Its function is as follows. Nucleotidase that shows phosphatase activity on nucleoside 5'-monophosphates. The chain is 5'-nucleotidase SurE from Methanothrix thermoacetophila (strain DSM 6194 / JCM 14653 / NBRC 101360 / PT) (Methanosaeta thermophila).